The following is an 856-amino-acid chain: Envelope glycoprotein gp150 (856 aa).

Residues 1 to 785 (MAEGFAANRQ…WIGNIPQYLK (785 aa)) are Extracellular-facing. Residues N220, N258, N269, N274, N298, N330, N336, N342, N418, N422, N448, N481, N499, N518, N531, N548, and N551 are each glycosylated (N-linked (GlcNAc...) asparagine; by host). Positions 616–636 (VMLALATVLSIAGAGTGATAI) are fusion peptide. The stretch at 643-693 (HQVLATHQEAIEKVTGALKINNLRLVTLEHQVLVIGLKVEAMEKFLYTAFA) forms a coiled coil. An immunosuppression region spans residues 662–680 (INNLRLVTLEHQVLVIGLK). 4 N-linked (GlcNAc...) asparagine; by host glycosylation sites follow: N717, N721, N729, and N737. A coiled-coil region spans residues 736 to 772 (YNQTKDLQQKFYEIIMDIEQNNVQGKTGIQQLQKWED). Residues 786-806 (GLLGGILGIGLGVLLLILCLP) traverse the membrane as a helical segment. Residues 807-856 (TLVDCIRNCIHKILGYTVIAMPEVEGEEIQPQMELRRNGRQCGMSEKEEE) lie on the Cytoplasmic side of the membrane.

In terms of assembly, the mature envelope protein (Env) consists of a trimer of SU-TM heterodimers attached by noncovalent interactions or by a labile interchain disulfide bond. Post-translationally, specific enzymatic cleavages in vivo yield mature proteins. Envelope glycoproteins are synthesized as an inactive precursor that is N-glycosylated and processed likely by host cell furin or by a furin-like protease in the Golgi to yield the mature SU and TM proteins. The cleavage site between SU and TM requires the minimal sequence [KR]-X-[KR]-R.

The protein resides in the virion membrane. Its subcellular location is the host cell membrane. Functionally, the surface protein (SU) attaches the virus to the host cell by binding to its receptor. This interaction triggers the refolding of the transmembrane protein (TM) and is thought to activate its fusogenic potential by unmasking its fusion peptide. Fusion occurs at the host cell plasma membrane. Its function is as follows. The transmembrane protein (TM) acts as a class I viral fusion protein. Under the current model, the protein has at least 3 conformational states: pre-fusion native state, pre-hairpin intermediate state, and post-fusion hairpin state. During viral and target cell membrane fusion, the coiled coil regions (heptad repeats) assume a trimer-of-hairpins structure, positioning the fusion peptide in close proximity to the C-terminal region of the ectodomain. The formation of this structure appears to drive apposition and subsequent fusion of viral and target cell membranes. Membranes fusion leads to delivery of the nucleocapsid into the cytoplasm. This is Envelope glycoprotein gp150 (env) from Felidae (cat family).